The chain runs to 328 residues: Malate dehydrogenase (328 aa).

13–19 (GAAGQIS) contacts NAD(+). 2 residues coordinate substrate: R94 and R100. Residues N107, Q114, and 131-133 (VGN) each bind NAD(+). Residues N133 and R164 each contribute to the substrate site. The active-site Proton acceptor is H189.

It belongs to the LDH/MDH superfamily. MDH type 2 family.

It carries out the reaction (S)-malate + NAD(+) = oxaloacetate + NADH + H(+). In terms of biological role, catalyzes the reversible oxidation of malate to oxaloacetate. The chain is Malate dehydrogenase from Alcanivorax borkumensis (strain ATCC 700651 / DSM 11573 / NCIMB 13689 / SK2).